A 501-amino-acid polypeptide reads, in one-letter code: Geissoschizine oxidase (501 aa).

The chain crosses the membrane as a helical span at residues Met1–Val21. Cys442 is a heme binding site.

This sequence belongs to the cytochrome P450 family. Heme serves as cofactor.

The protein resides in the membrane. It carries out the reaction (19E)-geissoschizine + reduced [NADPH--hemoprotein reductase] + O2 = akuammicine + formate + oxidized [NADPH--hemoprotein reductase] + H2O + H(+). It functions in the pathway alkaloid biosynthesis. A cytochrome P450 monooxygenase involved in the biosynthesis of strychnos monoterpene indole alkaloids (MIAs) natural products, compounds with effects on glucose absorption. Catalyzes the conversion of geissoschizine to akuammicine. The sequence is that of Geissoschizine oxidase from Alstonia scholaris (Dogbane).